Consider the following 511-residue polypeptide: ATP synthase subunit alpha 2 (511 aa).

Residue 173-180 (GDRQTGKS) participates in ATP binding.

This sequence belongs to the ATPase alpha/beta chains family. F-type ATPases have 2 components, CF(1) - the catalytic core - and CF(0) - the membrane proton channel. CF(1) has five subunits: alpha(3), beta(3), gamma(1), delta(1), epsilon(1). CF(0) has three main subunits: a(1), b(2) and c(9-12). The alpha and beta chains form an alternating ring which encloses part of the gamma chain. CF(1) is attached to CF(0) by a central stalk formed by the gamma and epsilon chains, while a peripheral stalk is formed by the delta and b chains.

It is found in the cell inner membrane. It carries out the reaction ATP + H2O + 4 H(+)(in) = ADP + phosphate + 5 H(+)(out). Produces ATP from ADP in the presence of a proton gradient across the membrane. The alpha chain is a regulatory subunit. In Nitrosospira multiformis (strain ATCC 25196 / NCIMB 11849 / C 71), this protein is ATP synthase subunit alpha 2.